The following is a 310-amino-acid chain: Pantothenate kinase (310 aa).

95-102 (GSVAVGKS) is an ATP binding site.

It belongs to the prokaryotic pantothenate kinase family.

The protein localises to the cytoplasm. It carries out the reaction (R)-pantothenate + ATP = (R)-4'-phosphopantothenate + ADP + H(+). It functions in the pathway cofactor biosynthesis; coenzyme A biosynthesis; CoA from (R)-pantothenate: step 1/5. This chain is Pantothenate kinase, found in Mycobacteroides abscessus (strain ATCC 19977 / DSM 44196 / CCUG 20993 / CIP 104536 / JCM 13569 / NCTC 13031 / TMC 1543 / L948) (Mycobacterium abscessus).